Reading from the N-terminus, the 357-residue chain is Neurogenic differentiation factor 1 (357 aa).

The disordered stretch occupies residues 1–94; it reads MTKSYSESGL…GPKKKKMTKA (94 aa). Residues 58–78 show a composition bias toward acidic residues; that stretch reads EEEEEDEDLEEEEEEEEEEED. Basic residues predominate over residues 81–93; the sequence is PKRRGPKKKKMTK. The Nuclear localization signal motif lies at 87 to 93; it reads KKKKMTK. Positions 101-153 constitute a bHLH domain; sequence LRRMKANARERNRMHGLNAALDNLRKVVPCYSKTQKLSKIETLRLAKNYIWAL. Phosphoserine occurs at positions 162, 259, 266, and 274. Ser-336 carries the post-translational modification Phosphoserine; by CaMK2.

As to quaternary structure, efficient DNA-binding requires dimerization with another bHLH protein. Heterodimer with TCF3/E47; the heterodimer is inhibited in presence of ID2, but not NR0B2, to E-box element. Interacts with EP300; the interaction is inhibited by NR0B2. Interacts with RREB1. Interacts with ATOH8. In islet cells, phosphorylated on Ser-274 upon glucose stimulation; which may be required for nuclear localization. In activated neurons, phosphorylated on Ser-336; which promotes dendritic growth. Phosphorylated by MAPK1; phosphorylation regulates heterodimerization and DNA-binding activities. Phosphorylation on Ser-266 and Ser-274 increases transactivation on the insulin promoter in glucose-stimulated insulinoma cells. In terms of tissue distribution, expressed in pancreatic beta cells, pulmonary neuroendocrine cells and retinal interneurons amacrine cells (at protein level). Expressed in endocrine cells of the pancreas. Expressed in the inner layer of cerebellar external granular layer (EGL). Expressed in the Ammon's horn (AH), which includes the CA1-CA3 pyramidal layer and in granule cells of the dentate gyrus (DG). Expressed in photoreceptors of the outer nuclear layer (ONL), in a subset of cells in the lower half of the inner nuclear layer (INL), and in a subset of cells in the ganglion cell layer (GCL) of the retina. Expressed in cholinergic and AII amacrine cell types. Expressed in differentiating neurons of both the central and peripheral nervous systems.

The protein resides in the cytoplasm. Its subcellular location is the nucleus. Its function is as follows. Acts as a transcriptional activator: mediates transcriptional activation by binding to E box-containing promoter consensus core sequences 5'-CANNTG-3'. Associates with the p300/CBP transcription coactivator complex to stimulate transcription of the secretin gene as well as the gene encoding the cyclin-dependent kinase inhibitor CDKN1A. Contributes to the regulation of several cell differentiation pathways, like those that promote the formation of early retinal ganglion cells, inner ear sensory neurons, granule cells forming either the cerebellum or the dentate gyrus cell layer of the hippocampus, endocrine islet cells of the pancreas and enteroendocrine cells of the small intestine. Together with PAX6 or SIX3, is required for the regulation of amacrine cell fate specification. Also required for dendrite morphogenesis and maintenance in the cerebellar cortex. Associates with chromatin to enhancer regulatory elements in genes encoding key transcriptional regulators of neurogenesis. In Mus musculus (Mouse), this protein is Neurogenic differentiation factor 1 (Neurod1).